Consider the following 275-residue polypeptide: Arylalkylamine N-acetyltransferase 1 (275 aa).

Acetyl-CoA is bound by residues 181-183 (LSV) and 189-193 (GLGIA). The region spanning 181–254 (LSVDTNYRGL…GEVVFKPAAP (74 aa)) is the N-acetyltransferase domain.

Belongs to the acetyltransferase family. AANAT subfamily. In the adult, expressed in the midgut portion of the thoracic segments and the frontal half of the abdomen (at protein level). Expressed in the epithelial cell layer facing the lumen of the gut (at protein level). In the brain, expressed in a sub-populations of neurons and astrocytes, and in a set of distinct stripes in the optic lobes (at protein level). Expressed mainly in serotonergic neurons but also in subsets of glutamatergic, GABAergic and cholinergic neurons (at protein level).

The protein resides in the cytoplasm. Its subcellular location is the nucleus. The enzyme catalyses a 2-arylethylamine + acetyl-CoA = an N-acetyl-2-arylethylamine + CoA + H(+). It catalyses the reaction serotonin + acetyl-CoA = N-acetylserotonin + CoA + H(+). The catalysed reaction is dopamine + acetyl-CoA = N-acetyldopamine + CoA + H(+). It carries out the reaction tyramine + acetyl-CoA = N-acetyltyramine + CoA + H(+). The enzyme catalyses octopamine + acetyl-CoA = N-acetyloctopamine + CoA + H(+). It catalyses the reaction 5-methoxytryptamine + acetyl-CoA = melatonin + CoA + H(+). The catalysed reaction is 2-phenylethylamine + acetyl-CoA = N-(2-phenylethyl)acetamide + CoA + H(+). It carries out the reaction noradrenaline + acetyl-CoA = N-acetylnoradrenaline + CoA + H(+). The enzyme catalyses tyramine + butanoyl-CoA = N-butanoyltyramine + CoA + H(+). It catalyses the reaction tyramine + hexanoyl-CoA = N-hexanoyltyramine + CoA + H(+). The catalysed reaction is tryptamine + acetyl-CoA = N-acetyltryptamine + CoA + H(+). It carries out the reaction dopamine + hexadecanoyl-CoA = N-hexadecanoyl-dopamine + CoA + H(+). The enzyme catalyses dopamine + (9Z)-octadecenoyl-CoA = N-(9Z-octadecanoyl)-dopamine + CoA + H(+). It catalyses the reaction serotonin + hexadecanoyl-CoA = N-hexadecanoyl-serotonin + CoA + H(+). The catalysed reaction is serotonin + (9Z)-octadecenoyl-CoA = N-(9Z-octadecenoyl)-serotonin + CoA + H(+). It carries out the reaction serotonin + octadecanoyl-CoA = N-octadecanoyl-serotonin + CoA + H(+). The enzyme catalyses serotonin + (5Z,8Z,11Z,14Z)-eicosatetraenoyl-CoA = N-[(5Z,8Z,11Z,14Z)-eicosatetraenoyl]-serotonin + CoA + H(+). It participates in aromatic compound metabolism; melatonin biosynthesis; melatonin from serotonin: step 1/2. With respect to regulation, inhibited by long-chain acyl-CoA thioesters, oleoyl-CoA (an analog of acetyl-CoA) and tyrosol (an analog of tyramine). In terms of biological role, catalyzes N-acetylation of tryptamine, tyramine, dopamine, serotonin and octopamine. In astrocytes, regulates sleep homeostasis by limiting the accumulation of serotonin and dopamine in the brain upon sleep deprivation. Is not essential for sclerotization. In Drosophila melanogaster (Fruit fly), this protein is Arylalkylamine N-acetyltransferase 1.